The sequence spans 407 residues: MTMMSDLSEDLVEEILCRVSITSLGAVRSTCKGWYVLSKTRVLCKAETKHQFLGFMKKNYKLCSMRFDLHGNFNEEGGEEFMNPSIKKSGNLLDQLDICKVFQCDGLLLCVTKEENTRLVVWNPYSGQIRWIKCNNSYHRYEGYAIGYNNNRKHKILRFSDMSFSTYKIYDFISNSWRVLDIAPNWHINPDQRGASLKGNTYFFAREKREDEEDEDILWQPVEYLLCFDFTTENFGQLHPLPFEQYIDDAGALSSFGEEKLAALFQSFASSVVEIWVTSMIEANAVSWIPFLKVDMKPHCSFRFRLPFDGGSFFIDEEKKVAVVIHVDVVAESEMNRYEDVAYIIGENGYVKKVCLVEAVNQGGSLNLSKRSCCNYPHVCCSSYVPSLAQINQSVEFENEREEEEAN.

In terms of domain architecture, F-box spans 2–49 (TMMSDLSEDLVEEILCRVSITSLGAVRSTCKGWYVLSKTRVLCKAETK).

This Arabidopsis thaliana (Mouse-ear cress) protein is Putative F-box protein At5g60560.